Here is a 96-residue protein sequence, read N- to C-terminus: Co-chaperonin GroES (96 aa).

It belongs to the GroES chaperonin family. In terms of assembly, heptamer of 7 subunits arranged in a ring. Interacts with the chaperonin GroEL.

The protein resides in the cytoplasm. Together with the chaperonin GroEL, plays an essential role in assisting protein folding. The GroEL-GroES system forms a nano-cage that allows encapsulation of the non-native substrate proteins and provides a physical environment optimized to promote and accelerate protein folding. GroES binds to the apical surface of the GroEL ring, thereby capping the opening of the GroEL channel. This is Co-chaperonin GroES from Geotalea daltonii (strain DSM 22248 / JCM 15807 / FRC-32) (Geobacter daltonii).